Reading from the N-terminus, the 221-residue chain is ATP-dependent Clp protease proteolytic subunit 3 (221 aa).

The active-site Nucleophile is serine 118. Histidine 143 is an active-site residue.

The protein belongs to the peptidase S14 family. Fourteen ClpP subunits assemble into 2 heptameric rings which stack back to back to give a disk-like structure with a central cavity, resembling the structure of eukaryotic proteasomes.

It is found in the cytoplasm. It carries out the reaction Hydrolysis of proteins to small peptides in the presence of ATP and magnesium. alpha-casein is the usual test substrate. In the absence of ATP, only oligopeptides shorter than five residues are hydrolyzed (such as succinyl-Leu-Tyr-|-NHMec, and Leu-Tyr-Leu-|-Tyr-Trp, in which cleavage of the -Tyr-|-Leu- and -Tyr-|-Trp bonds also occurs).. Its function is as follows. Cleaves peptides in various proteins in a process that requires ATP hydrolysis. Has a chymotrypsin-like activity. Plays a major role in the degradation of misfolded proteins. The chain is ATP-dependent Clp protease proteolytic subunit 3 from Nocardia farcinica (strain IFM 10152).